A 306-amino-acid chain; its full sequence is Lipoyl synthase (306 aa).

7 residues coordinate [4Fe-4S] cluster: Cys55, Cys60, Cys66, Cys81, Cys85, Cys88, and Ser294. The Radical SAM core domain occupies 67–283 (WNHRTATFLL…RAYALARGFR (217 aa)).

The protein belongs to the radical SAM superfamily. Lipoyl synthase family. Requires [4Fe-4S] cluster as cofactor.

The protein resides in the cytoplasm. The catalysed reaction is [[Fe-S] cluster scaffold protein carrying a second [4Fe-4S](2+) cluster] + N(6)-octanoyl-L-lysyl-[protein] + 2 oxidized [2Fe-2S]-[ferredoxin] + 2 S-adenosyl-L-methionine + 4 H(+) = [[Fe-S] cluster scaffold protein] + N(6)-[(R)-dihydrolipoyl]-L-lysyl-[protein] + 4 Fe(3+) + 2 hydrogen sulfide + 2 5'-deoxyadenosine + 2 L-methionine + 2 reduced [2Fe-2S]-[ferredoxin]. It participates in protein modification; protein lipoylation via endogenous pathway; protein N(6)-(lipoyl)lysine from octanoyl-[acyl-carrier-protein]: step 2/2. In terms of biological role, catalyzes the radical-mediated insertion of two sulfur atoms into the C-6 and C-8 positions of the octanoyl moiety bound to the lipoyl domains of lipoate-dependent enzymes, thereby converting the octanoylated domains into lipoylated derivatives. In Chloroflexus aggregans (strain MD-66 / DSM 9485), this protein is Lipoyl synthase.